The chain runs to 432 residues: Adenylosuccinate synthetase (432 aa).

GTP-binding positions include 13–19 (GDEGKGK) and 41–43 (GHT). Residue aspartate 14 is the Proton acceptor of the active site. Residues aspartate 14 and glycine 41 each contribute to the Mg(2+) site. IMP is bound by residues 14 to 17 (DEGK), 39 to 42 (NAGH), threonine 130, arginine 144, glutamine 225, threonine 240, and arginine 304. Histidine 42 acts as the Proton donor in catalysis. 300-306 (AVTGRPR) contributes to the substrate binding site. Residues arginine 306, 332–334 (KLD), and 415–417 (STG) each bind GTP.

The protein belongs to the adenylosuccinate synthetase family. Homodimer. It depends on Mg(2+) as a cofactor.

It localises to the cytoplasm. It carries out the reaction IMP + L-aspartate + GTP = N(6)-(1,2-dicarboxyethyl)-AMP + GDP + phosphate + 2 H(+). Its pathway is purine metabolism; AMP biosynthesis via de novo pathway; AMP from IMP: step 1/2. Its function is as follows. Plays an important role in the de novo pathway of purine nucleotide biosynthesis. Catalyzes the first committed step in the biosynthesis of AMP from IMP. In Actinobacillus succinogenes (strain ATCC 55618 / DSM 22257 / CCUG 43843 / 130Z), this protein is Adenylosuccinate synthetase.